Reading from the N-terminus, the 501-residue chain is Leukocyte receptor cluster member 9 (501 aa).

4 disordered regions span residues 1 to 43 (MGSR…PAPP), 61 to 86 (RQPHPGAPAPPGREAQPEAGAKKPPL), 203 to 234 (GQEAQAAPKRGSTRPLCTGHQEPGVEEPGELE), and 281 to 300 (QALGVPGGSAETTEAEWGPA). The C3H1-type zinc finger occupies 40-67 (PAPPPACRFFLEGRCRFGARCRQPHPGA).

The chain is Leukocyte receptor cluster member 9 (LENG9) from Homo sapiens (Human).